The primary structure comprises 458 residues: Enolase (458 aa).

Residue Gln177 participates in (2R)-2-phosphoglycerate binding. The Proton donor role is filled by Glu219. Positions 256, 310, and 337 each coordinate Mg(2+). Residues Lys362, Arg391, Ser392, and Lys413 each contribute to the (2R)-2-phosphoglycerate site. Lys362 functions as the Proton acceptor in the catalytic mechanism.

This sequence belongs to the enolase family. Mg(2+) serves as cofactor.

It localises to the cytoplasm. The protein localises to the secreted. The protein resides in the cell surface. It carries out the reaction (2R)-2-phosphoglycerate = phosphoenolpyruvate + H2O. The protein operates within carbohydrate degradation; glycolysis; pyruvate from D-glyceraldehyde 3-phosphate: step 4/5. Catalyzes the reversible conversion of 2-phosphoglycerate (2-PG) into phosphoenolpyruvate (PEP). It is essential for the degradation of carbohydrates via glycolysis. The sequence is that of Enolase from Mycoplasma genitalium (strain ATCC 33530 / DSM 19775 / NCTC 10195 / G37) (Mycoplasmoides genitalium).